Consider the following 394-residue polypeptide: NAD(P)H-quinone oxidoreductase subunit H (394 aa).

The protein belongs to the complex I 49 kDa subunit family. As to quaternary structure, NDH-1 can be composed of about 15 different subunits; different subcomplexes with different compositions have been identified which probably have different functions.

The protein resides in the cellular thylakoid membrane. It carries out the reaction a plastoquinone + NADH + (n+1) H(+)(in) = a plastoquinol + NAD(+) + n H(+)(out). It catalyses the reaction a plastoquinone + NADPH + (n+1) H(+)(in) = a plastoquinol + NADP(+) + n H(+)(out). Its function is as follows. NDH-1 shuttles electrons from an unknown electron donor, via FMN and iron-sulfur (Fe-S) centers, to quinones in the respiratory and/or the photosynthetic chain. The immediate electron acceptor for the enzyme in this species is believed to be plastoquinone. Couples the redox reaction to proton translocation, and thus conserves the redox energy in a proton gradient. Cyanobacterial NDH-1 also plays a role in inorganic carbon-concentration. This is NAD(P)H-quinone oxidoreductase subunit H from Nostoc punctiforme (strain ATCC 29133 / PCC 73102).